A 497-amino-acid polypeptide reads, in one-letter code: Bypass of stop codon protein 6 (497 aa).

Over 1–72 (MDASSVPPKV…KVKTYPLNYQ (72 aa)) the chain is Lumenal. Residues Ser37 and Ser41 each carry the phosphoserine modification. An N-linked (GlcNAc...) asparagine glycan is attached at Asn49. The chain crosses the membrane as a helical span at residues 73–93 (TVPLVKLQVIACLIMFVVFGM). Residues 94 to 144 (NDQTVGALLPTLIEYYHISRVDVSNVFIVQLCGYVMASLSKERLNKHFGMR) are Cytoplasmic-facing. A helical transmembrane segment spans residues 145–165 (GGMLLAAGLCIVFLIILATAP). The Lumenal portion of the chain corresponds to 166–167 (SS). A helical membrane pass occupies residues 168–188 (FYVCMFCGLPLGLGIGILDST). Topologically, residues 189–205 (GNVLMGSLLVHKNELMG) are cytoplasmic. The chain crosses the membrane as a helical span at residues 206–226 (IMHGLYGAAAMVTPPLVSYFV). Over 227–232 (EWGHWS) the chain is Lumenal. Residues 233-253 (LFFLIPLFFSIIGMIVIFPAF) form a helical membrane-spanning segment. Topologically, residues 254-300 (KFETASKYDYLCSVENKESNNDVEEAGDNSLMESTKASPGFFELLRN) are cytoplasmic. Residues 301-321 (PAIFLYSLYLFLYLGAEITTG) traverse the membrane as a helical segment. Topologically, residues 322–340 (SWFFSYLLETKSSNKVAMS) are lumenal. Residues 341 to 361 (YIAASFWTGLTVGRLCLGFVT) form a helical membrane-spanning segment. At 362–373 (ERFFENEYKASK) the chain is on the cytoplasmic side. The helical transmembrane segment at 374–394 (AYAFLTLSSYTLFVLVGLINS) threads the bilayer. Residues 395 to 397 (SSV) lie on the Lumenal side of the membrane. Residues 398-418 (FYFVVLFFVVFCCGTFIGPLF) form a helical membrane-spanning segment. Topologically, residues 419–439 (PNASIVALQVLPKRLHVSGVG) are cytoplasmic. The helical transmembrane segment at 440-460 (VAVAVGGCGGAAIPYLAGVIA) threads the bilayer. Residues 461–462 (HT) are Lumenal-facing. Residues 463-483 (VGIQYIPLLCWIMVALFTLEW) form a helical membrane-spanning segment. The Cytoplasmic portion of the chain corresponds to 484–497 (TLYPKFIKGHEEYF).

The protein belongs to the major facilitator superfamily.

The protein resides in the golgi apparatus. It is found in the cis-Golgi network membrane. Its function is as follows. Probable transporter. In Saccharomyces cerevisiae (strain ATCC 204508 / S288c) (Baker's yeast), this protein is Bypass of stop codon protein 6 (BSC6).